A 658-amino-acid polypeptide reads, in one-letter code: Threonine--tRNA ligase (658 aa).

The TGS domain occupies 1–64 (MSCSISLSFP…GQSGQVEIIT (64 aa)). The tract at residues 246 to 549 (DHRRLGREMD…LIENFAGHMP (304 aa)) is catalytic. Residues C343, H394, and H526 each contribute to the Zn(2+) site.

Belongs to the class-II aminoacyl-tRNA synthetase family. As to quaternary structure, homodimer. It depends on Zn(2+) as a cofactor.

The protein localises to the cytoplasm. The catalysed reaction is tRNA(Thr) + L-threonine + ATP = L-threonyl-tRNA(Thr) + AMP + diphosphate + H(+). Functionally, catalyzes the attachment of threonine to tRNA(Thr) in a two-step reaction: L-threonine is first activated by ATP to form Thr-AMP and then transferred to the acceptor end of tRNA(Thr). Also edits incorrectly charged L-seryl-tRNA(Thr). The protein is Threonine--tRNA ligase of Bartonella tribocorum (strain CIP 105476 / IBS 506).